We begin with the raw amino-acid sequence, 409 residues long: Histone deacetylase 7 (409 aa).

Positions 11–324 (RVSYFYEPMI…WCYETAIAVG (314 aa)) are histone deacetylase. Residue H148 is the Proton donor/acceptor of the active site. D267 is a binding site for Zn(2+). The tract at residues 383–409 (PFQDTPSSSQATEAAEVDMEKRNDPRI) is disordered. Residues 384–394 (FQDTPSSSQAT) show a composition bias toward polar residues. Over residues 400 to 409 (DMEKRNDPRI) the composition is skewed to basic and acidic residues.

It belongs to the histone deacetylase family. HD type 1 subfamily. Requires Zn(2+) as cofactor. Low expression in flowers.

The protein resides in the nucleus. The catalysed reaction is N(6)-acetyl-L-lysyl-[histone] + H2O = L-lysyl-[histone] + acetate. Its function is as follows. Responsible for the deacetylation of lysine residues on the N-terminal part of the core histones (H2A, H2B, H3 and H4). Histone deacetylation gives a tag for epigenetic repression and plays an important role in transcriptional regulation, cell cycle progression and developmental events. May be involved in flowering induction. Histone deacetylases act via the formation of large multiprotein complexes. The sequence is that of Histone deacetylase 7 (HDA7) from Arabidopsis thaliana (Mouse-ear cress).